The primary structure comprises 464 residues: tRNA modification GTPase MnmE (464 aa).

(6S)-5-formyl-5,6,7,8-tetrahydrofolate is bound by residues Arg25, Glu87, and Lys130. Positions 226–386 (GLSVVLAGQP…LRAELLRIAG (161 aa)) constitute a TrmE-type G domain. Asn236 is a binding site for K(+). GTP contacts are provided by residues 236–241 (NVGKSS), 255–261 (TPIAGTT), and 280–283 (DTAG). Residue Ser240 participates in Mg(2+) binding. K(+)-binding residues include Thr255, Ile257, and Thr260. Residue Thr261 coordinates Mg(2+). Lys464 contacts (6S)-5-formyl-5,6,7,8-tetrahydrofolate.

This sequence belongs to the TRAFAC class TrmE-Era-EngA-EngB-Septin-like GTPase superfamily. TrmE GTPase family. As to quaternary structure, homodimer. Heterotetramer of two MnmE and two MnmG subunits. Requires K(+) as cofactor.

The protein localises to the cytoplasm. Exhibits a very high intrinsic GTPase hydrolysis rate. Involved in the addition of a carboxymethylaminomethyl (cmnm) group at the wobble position (U34) of certain tRNAs, forming tRNA-cmnm(5)s(2)U34. This chain is tRNA modification GTPase MnmE, found in Burkholderia ambifaria (strain ATCC BAA-244 / DSM 16087 / CCUG 44356 / LMG 19182 / AMMD) (Burkholderia cepacia (strain AMMD)).